Here is a 536-residue protein sequence, read N- to C-terminus: Nucleolar protein 58 (536 aa).

Thr34 carries the post-translational modification Phosphothreonine. Phosphoserine is present on Ser109. A Glycyl lysine isopeptide (Lys-Gly) (interchain with G-Cter in SUMO2) cross-link involves residue Lys157. In terms of domain architecture, Nop spans 282–400; it reads IAPNVTVMVG…LEARLRILED (119 aa). Phosphoserine is present on residues Ser304 and Ser351. Glycyl lysine isopeptide (Lys-Gly) (interchain with G-Cter in SUMO2) cross-links involve residues Lys353, Lys411, Lys415, Lys422, Lys426, Lys441, Lys444, and Lys465. Basic and acidic residues predominate over residues 414–427; it reads AKAEKYEHKSEVKT. The tract at residues 414 to 440 is disordered; that stretch reads AKAEKYEHKSEVKTYDPSGDSTLPTCS. Lys467 participates in a covalent cross-link: Glycyl lysine isopeptide (Lys-Gly) (interchain with G-Cter in SUMO); alternate. A Glycyl lysine isopeptide (Lys-Gly) (interchain with G-Cter in SUMO1); alternate cross-link involves residue Lys467. Residue Lys467 forms a Glycyl lysine isopeptide (Lys-Gly) (interchain with G-Cter in SUMO2); alternate linkage. Residues 470-488 show a composition bias toward acidic residues; that stretch reads VEEEMEEEEAEEEQVVEEE. Residues 470-536 are disordered; the sequence is VEEEMEEEEA…KKKKKKDAED (67 aa). Residue Lys492 forms a Glycyl lysine isopeptide (Lys-Gly) (interchain with G-Cter in SUMO2) linkage. The segment covering 492-502 has biased composition (basic residues); sequence KKKKKKDKKKH. Lys504 participates in a covalent cross-link: Glycyl lysine isopeptide (Lys-Gly) (interchain with G-Cter in SUMO); alternate. Lys504 is covalently cross-linked (Glycyl lysine isopeptide (Lys-Gly) (interchain with G-Cter in SUMO2); alternate). Phosphoserine occurs at positions 509 and 521. Residues 524-536 are compositionally biased toward basic residues; it reads KKKKKKKKKDAED.

This sequence belongs to the NOP5/NOP56 family. As to quaternary structure, core component of box C/D small nucleolar ribonucleoprotein (snoRNP) particles; the core proteins SNU13, NOP56, NOP58 and FBL or FBLL1 assemble stepwise onto the snoRNA. Interacts with NOLC1/Nopp140. Interacts with NOPCHAP1, NUFIP1, RUVBL1 and RUVBL2; NOPCHAP1 bridges the association of NOP58 with RUVBL1:RUVBL2 and NUFIP1. Interacts with PIH1D1. Part of the small subunit (SSU) processome, composed of more than 70 proteins and the RNA chaperone small nucleolar RNA (snoRNA) U3. In terms of processing, sumoylation is essential for high-affinity binding to snoRNAs.

It localises to the nucleus. Its subcellular location is the nucleolus. The protein resides in the nucleoplasm. Functionally, required for the biogenesis of box C/D snoRNAs such as U3, U8 and U14 snoRNAs. Part of the small subunit (SSU) processome, first precursor of the small eukaryotic ribosomal subunit. During the assembly of the SSU processome in the nucleolus, many ribosome biogenesis factors, an RNA chaperone and ribosomal proteins associate with the nascent pre-rRNA and work in concert to generate RNA folding, modifications, rearrangements and cleavage as well as targeted degradation of pre-ribosomal RNA by the RNA exosome. Core component of box C/D small nucleolar ribonucleoprotein (snoRNP) complexes that function in methylation of multiple sites on ribosomal RNAs (rRNAs) and messenger RNAs (mRNAs). The chain is Nucleolar protein 58 (Nop58) from Mus musculus (Mouse).